The primary structure comprises 1747 residues: E3 ubiquitin-protein ligase listerin (1747 aa).

The segment at 1-24 (MGGKTKQAPRTKNNAKPSSSSRTA) is disordered. Over residues 8–24 (APRTKNNAKPSSSSRTA) the composition is skewed to polar residues. HEAT repeat units lie at residues 65–102 (AAIS…QSDV), 106–144 (KNIL…KCKK), 346–383 (NIRK…KVTQ), 424–461 (NAYF…NVLE), and 508–547 (KFWI…ANPS). Ser-566 is modified (phosphoserine). HEAT repeat units follow at residues 612-653 (SRYI…LLGQ), 664-711 (EIVF…CAEA), 789-825 (SFIA…EHRP), 952-989 (LSRN…DPED), 1005-1042 (KWNE…ELVL), 1053-1090 (GNSS…FCPQ), 1129-1166 (KLSQ…NFEG), 1216-1258 (VEFI…SIAQ), 1269-1307 (VAVY…LFAK), 1330-1363 (FQAC…NSNI), 1364-1400 (TLDH…HFVA), and 1500-1539 (ENFL…QKDR). Residues 1697 to 1744 (CYVCYTVIHQETCQLPKLTCKTCKKKFHGPCLYKWFTTSSKSTCPICR) form an RING-type zinc finger.

This sequence belongs to the LTN1 family. In terms of assembly, component of the ribosome quality control complex (RQC), composed of at least the E3 ubiquitin ligase l(3)76BDr/LTN1 and Clbn/NEMF. The complex probably also contains TCF25 as well as TER94/VCP and its ubiquitin-binding cofactors. RQC forms a stable complex with 60S ribosomal subunits.

The protein localises to the cytoplasm. It is found in the cytosol. It catalyses the reaction S-ubiquitinyl-[E2 ubiquitin-conjugating enzyme]-L-cysteine + [acceptor protein]-L-lysine = [E2 ubiquitin-conjugating enzyme]-L-cysteine + N(6)-ubiquitinyl-[acceptor protein]-L-lysine.. It participates in protein modification; protein ubiquitination. In terms of biological role, E3 ubiquitin-protein ligase component of the ribosome quality control complex (RQC), a ribosome-associated complex that mediates ubiquitination and extraction of incompletely synthesized nascent chains for proteasomal degradation. Ubiquitination leads to TER94/VCP recruitment for extraction and degradation of the incomplete translation product. The protein is E3 ubiquitin-protein ligase listerin of Drosophila melanogaster (Fruit fly).